The sequence spans 159 residues: Phosphopantetheine adenylyltransferase (159 aa).

Residue S8 coordinates substrate. ATP contacts are provided by residues 8–9 (SF) and H16. Substrate-binding residues include K40, T72, and R86. Residues 87 to 89 (GLR), E97, and 122 to 128 (HSFVSSS) contribute to the ATP site.

This sequence belongs to the bacterial CoaD family. In terms of assembly, homohexamer. Requires Mg(2+) as cofactor.

Its subcellular location is the cytoplasm. It catalyses the reaction (R)-4'-phosphopantetheine + ATP + H(+) = 3'-dephospho-CoA + diphosphate. Its pathway is cofactor biosynthesis; coenzyme A biosynthesis; CoA from (R)-pantothenate: step 4/5. Its function is as follows. Reversibly transfers an adenylyl group from ATP to 4'-phosphopantetheine, yielding dephospho-CoA (dPCoA) and pyrophosphate. This chain is Phosphopantetheine adenylyltransferase, found in Synechococcus sp. (strain JA-2-3B'a(2-13)) (Cyanobacteria bacterium Yellowstone B-Prime).